Here is a 336-residue protein sequence, read N- to C-terminus: Holliday junction branch migration complex subunit RuvB (336 aa).

A large ATPase domain (RuvB-L) region spans residues 1–183 (MATERLVAGN…FGINSRLEFY (183 aa)). ATP is bound by residues Leu22, Arg23, Gly64, Lys67, Thr68, Thr69, 130–132 (EDF), Arg173, Tyr183, and Arg220. Thr68 lines the Mg(2+) pocket. Positions 184-254 (QVAELEEIIR…VAREALELLQ (71 aa)) are small ATPAse domain (RuvB-S). The tract at residues 257 to 336 (AAGLDSSDRR…LGIKPEDRLF (80 aa)) is head domain (RuvB-H). DNA contacts are provided by Arg312 and Arg317.

Belongs to the RuvB family. In terms of assembly, homohexamer. Forms an RuvA(8)-RuvB(12)-Holliday junction (HJ) complex. HJ DNA is sandwiched between 2 RuvA tetramers; dsDNA enters through RuvA and exits via RuvB. An RuvB hexamer assembles on each DNA strand where it exits the tetramer. Each RuvB hexamer is contacted by two RuvA subunits (via domain III) on 2 adjacent RuvB subunits; this complex drives branch migration. In the full resolvosome a probable DNA-RuvA(4)-RuvB(12)-RuvC(2) complex forms which resolves the HJ.

The protein localises to the cytoplasm. It catalyses the reaction ATP + H2O = ADP + phosphate + H(+). Its function is as follows. The RuvA-RuvB-RuvC complex processes Holliday junction (HJ) DNA during genetic recombination and DNA repair, while the RuvA-RuvB complex plays an important role in the rescue of blocked DNA replication forks via replication fork reversal (RFR). RuvA specifically binds to HJ cruciform DNA, conferring on it an open structure. The RuvB hexamer acts as an ATP-dependent pump, pulling dsDNA into and through the RuvAB complex. RuvB forms 2 homohexamers on either side of HJ DNA bound by 1 or 2 RuvA tetramers; 4 subunits per hexamer contact DNA at a time. Coordinated motions by a converter formed by DNA-disengaged RuvB subunits stimulates ATP hydrolysis and nucleotide exchange. Immobilization of the converter enables RuvB to convert the ATP-contained energy into a lever motion, pulling 2 nucleotides of DNA out of the RuvA tetramer per ATP hydrolyzed, thus driving DNA branch migration. The RuvB motors rotate together with the DNA substrate, which together with the progressing nucleotide cycle form the mechanistic basis for DNA recombination by continuous HJ branch migration. Branch migration allows RuvC to scan DNA until it finds its consensus sequence, where it cleaves and resolves cruciform DNA. The chain is Holliday junction branch migration complex subunit RuvB from Moorella thermoacetica (strain ATCC 39073 / JCM 9320).